The primary structure comprises 221 residues: Endo-1,4-beta-xylanase 11A (221 aa).

The first 17 residues, 1 to 17, serve as a signal peptide directing secretion; sequence MVSFTTLLTAVATAVSA. Positions 28–218 constitute a GH11 domain; that stretch reads RGIQPGTGVH…SSGSAEIEVR (191 aa). An N-linked (GlcNAc...) asparagine glycan is attached at asparagine 89. Catalysis depends on glutamate 113, which acts as the Nucleophile. The active-site Proton donor is the glutamate 205.

It belongs to the glycosyl hydrolase 11 (cellulase G) family.

The protein resides in the secreted. The enzyme catalyses Endohydrolysis of (1-&gt;4)-beta-D-xylosidic linkages in xylans.. It functions in the pathway glycan degradation; xylan degradation. With respect to regulation, retains an activity of 52.5% in the presence of 5 mM SDS. Its function is as follows. Endo-1,4-beta-xylanase involved in the hydrolysis of xylan, a major structural heterogeneous polysaccharide found in plant biomass representing the second most abundant polysaccharide in the biosphere, after cellulose. Is an alkali-tolerant enzyme, exhibiting 50.6% of activity at pH 9.0, and 26.9% even at pH 10.0. The polypeptide is Endo-1,4-beta-xylanase 11A (Humicola insolens (Soft-rot fungus)).